The chain runs to 175 residues: Large ribosomal subunit protein uL5 (175 aa).

This sequence belongs to the universal ribosomal protein uL5 family. Part of the 50S ribosomal subunit; contacts the 5S rRNA and probably tRNA. Forms a bridge to the 30S subunit in the 70S ribosome.

This is one of the proteins that bind and probably mediate the attachment of the 5S RNA into the large ribosomal subunit, where it forms part of the central protuberance. In the 70S ribosome it contacts protein S13 of the 30S subunit (bridge B1b), connecting the 2 subunits; this bridge is implicated in subunit movement. May contact the P site tRNA; the 5S rRNA and some of its associated proteins might help stabilize positioning of ribosome-bound tRNAs. The chain is Large ribosomal subunit protein uL5 from Halobacterium salinarum (strain ATCC 29341 / DSM 671 / R1).